A 427-amino-acid chain; its full sequence is Enolase (427 aa).

A (2R)-2-phosphoglycerate-binding site is contributed by Q163. E205 (proton donor) is an active-site residue. Positions 242, 285, and 312 each coordinate Mg(2+). Residues K337, R366, S367, and K388 each coordinate (2R)-2-phosphoglycerate. Catalysis depends on K337, which acts as the Proton acceptor.

It belongs to the enolase family. The cofactor is Mg(2+).

The protein resides in the cytoplasm. Its subcellular location is the secreted. The protein localises to the cell surface. The catalysed reaction is (2R)-2-phosphoglycerate = phosphoenolpyruvate + H2O. It functions in the pathway carbohydrate degradation; glycolysis; pyruvate from D-glyceraldehyde 3-phosphate: step 4/5. Its function is as follows. Catalyzes the reversible conversion of 2-phosphoglycerate (2-PG) into phosphoenolpyruvate (PEP). It is essential for the degradation of carbohydrates via glycolysis. The protein is Enolase of Ralstonia nicotianae (strain ATCC BAA-1114 / GMI1000) (Ralstonia solanacearum).